A 405-amino-acid chain; its full sequence is Protein NDRG4 (405 aa).

The interval 352 to 405 (AGAVPSASMTRLARSRTASLTSASSVDGARPRPCTQSESSDGIGQINHTMEVSC) is disordered. Residues 361–376 (TRLARSRTASLTSASS) show a composition bias toward low complexity. Over residues 385–405 (CTQSESSDGIGQINHTMEVSC) the composition is skewed to polar residues.

It belongs to the NDRG family.

It localises to the cytoplasm. Its subcellular location is the cytosol. Functionally, contributes to the maintenance of intracerebral BDNF levels within the normal range. May enhance growth factor-induced ERK1 and ERK2 phosphorylation. May attenuate growth factor-promoted ELK1 phosphorylation in a microtubule-dependent manner. The sequence is that of Protein NDRG4 from Xenopus tropicalis (Western clawed frog).